A 622-amino-acid polypeptide reads, in one-letter code: Membrane protein insertase YidC (622 aa).

The chain crosses the membrane as a helical span at residues 8 to 28; sequence LFLALILSMGIWMGVNYFFFP. Basic and acidic residues predominate over residues 33–61; sequence KTSETKEVKVDKPSDDKQDQIQKEKKESR. The disordered stretch occupies residues 33 to 70; sequence KTSETKEVKVDKPSDDKQDQIQKEKKESRTTIPSKGTK. Transmembrane regions (helical) follow at residues 413 to 433, 484 to 504, 532 to 552, and 571 to 591; these read FTIP…KLVF, VGGC…YTAF, AIPY…LMVG, and MLMY…PSGV.

It belongs to the OXA1/ALB3/YidC family. Type 1 subfamily. Interacts with the Sec translocase complex via SecD. Specifically interacts with transmembrane segments of nascent integral membrane proteins during membrane integration.

It is found in the cell inner membrane. Functionally, required for the insertion and/or proper folding and/or complex formation of integral membrane proteins into the membrane. Involved in integration of membrane proteins that insert both dependently and independently of the Sec translocase complex, as well as at least some lipoproteins. Aids folding of multispanning membrane proteins. This Leptospira borgpetersenii serovar Hardjo-bovis (strain JB197) protein is Membrane protein insertase YidC.